The following is a 163-amino-acid chain: Transcriptional repressor NrdR (163 aa).

A zinc finger spans residues 3-34 (CPFCAYADTRVVDSRLADDGGSVRRRRECPQC). An ATP-cone domain is found at 49 to 139 (PVVVKTDGRR…VYRRFEDVDA (91 aa)).

The protein belongs to the NrdR family. The cofactor is Zn(2+).

In terms of biological role, negatively regulates transcription of bacterial ribonucleotide reductase nrd genes and operons by binding to NrdR-boxes. This Acidithiobacillus ferrooxidans (strain ATCC 23270 / DSM 14882 / CIP 104768 / NCIMB 8455) (Ferrobacillus ferrooxidans (strain ATCC 23270)) protein is Transcriptional repressor NrdR.